The following is a 169-amino-acid chain: Ribosome maturation factor RimM (169 aa).

The PRC barrel domain maps to 95-168 (EGNYYIFQIV…KMKVELLEGL (74 aa)).

The protein belongs to the RimM family. As to quaternary structure, binds ribosomal protein uS19.

The protein resides in the cytoplasm. An accessory protein needed during the final step in the assembly of 30S ribosomal subunit, possibly for assembly of the head region. Essential for efficient processing of 16S rRNA. May be needed both before and after RbfA during the maturation of 16S rRNA. It has affinity for free ribosomal 30S subunits but not for 70S ribosomes. The chain is Ribosome maturation factor RimM from Desulforamulus reducens (strain ATCC BAA-1160 / DSM 100696 / MI-1) (Desulfotomaculum reducens).